The primary structure comprises 750 residues: Neprilysin (750 aa).

The N-myristoyl glycine moiety is linked to residue Gly2. Topologically, residues 2–28 (GRSESQMDITDINAPKPKKKQRWTPLE) are cytoplasmic. Residues Ser4 and Ser6 each carry the phosphoserine modification. The short motif at 16 to 23 (PKPKKKQR) is the Stop-transfer sequence element. A helical; Signal-anchor for type II membrane protein membrane pass occupies residues 29 to 51 (ISLSVLVLLLTIIAVTMIALYAT). The Extracellular portion of the chain corresponds to 52-750 (YDDGICKSSD…MNPERKCRVW (699 aa)). Positions 56–750 (ICKSSDCIKS…MNPERKCRVW (695 aa)) constitute a Peptidase M13 domain. Intrachain disulfides connect Cys57–Cys62, Cys80–Cys735, Cys88–Cys695, Cys143–Cys411, Cys234–Cys242, and Cys621–Cys747. Residue Arg103 participates in a peptide binding. N-linked (GlcNAc...) asparagine glycosylation is found at Asn145 and Asn211. 3 N-linked (GlcNAc...) asparagine glycosylation sites follow: Asn285, Asn311, and Asn325. His584 contributes to the Zn(2+) binding site. The active site involves Glu585. His588 lines the Zn(2+) pocket. The N-linked (GlcNAc...) asparagine glycan is linked to Asn628. Glu647 contacts Zn(2+). The active-site Proton donor is Asp651.

This sequence belongs to the peptidase M13 family. It depends on Zn(2+) as a cofactor. Post-translationally, myristoylation is a determinant of membrane targeting. In terms of processing, glycosylation at Asn-628 is necessary both for surface expression and neutral endopeptidase activity.

It is found in the cell membrane. The catalysed reaction is Preferential cleavage of polypeptides between hydrophobic residues, particularly with Phe or Tyr at P1'.. It carries out the reaction substance P + H2O = substance P(1-9) + L-Leu-L-Met-NH2. It catalyses the reaction substance P + H2O = substance P(1-7) + L-Phe-Gly-L-Leu-L-Met-NH2. The enzyme catalyses neurotensin + H2O = neurotensin(1-11) + L-isoleucyl-L-leucine. The catalysed reaction is neurotensin + H2O = neurotensin(1-10) + L-tyrosyl-L-isoleucyl-L-leucine. Thermolysin-like specificity, but is almost confined on acting on polypeptides of up to 30 amino acids. Biologically important in the destruction of opioid peptides such as Met- and Leu-enkephalins by cleavage of a Gly-Phe bond. Catalyzes cleavage of bradykinin, substance P and neurotensin peptides. Able to cleave angiotensin-1, angiotensin-2 and angiotensin 1-9. Involved in the degradation of the atrial natriuretic factor (ANF). Displays UV-inducible elastase activity toward skin preelastic and elastic fibers. The sequence is that of Neprilysin from Mus musculus (Mouse).